The chain runs to 540 residues: MSAKDVKFHDSARARIVKGVNVLADAVKVTLGPKGRNVVIERSFGAPTITKDGVSVAKEIELKDRFENMGAQIVKQVASKTADVAGDGTTTATVLAQAIVQEGMKHVAAGMNPMDLKRGIDKAVAAVLDELRKLSKPISTNREIAQVGSISANADEAIGKIIADAMEKVGKEGVITVEDGKSLENELDVVEGMQFDRGYVSPYFINDPEKQAAYLDDALILLHDKKISNIRDLLPVLEATSKAGKPLLIVAEDIDGEALATLVVNAMRGILKVAAVKAPGFGDRRKAMLEDIAILTGATVISEETGKQLQKASLEDLGSAKRVEVRKEDTIIIDGAGDQERIEARVKSIRTQIDETTSDYDREKLQERVAKLAGGVAVIKVGAATEVEMKEKKDRVDDALHATRAAVEEGIVPGGGVALLRARSTATSLKGANSDQDAGIQIVLRALEAPLRVIASNAGDEPSVVIAKVLEGKGNFGYNAATGEYGDLVEAGVVDPTKVTRTALQNAASIAGLILTTDATVADAPKDEKPAQAPAPELEY.

ATP contacts are provided by residues 30–33 (TLGP), K51, 87–91 (DGTTT), G415, 479–481 (NAA), and D495.

It belongs to the chaperonin (HSP60) family. Forms a cylinder of 14 subunits composed of two heptameric rings stacked back-to-back. Interacts with the co-chaperonin GroES.

The protein resides in the cytoplasm. It carries out the reaction ATP + H2O + a folded polypeptide = ADP + phosphate + an unfolded polypeptide.. Functionally, together with its co-chaperonin GroES, plays an essential role in assisting protein folding. The GroEL-GroES system forms a nano-cage that allows encapsulation of the non-native substrate proteins and provides a physical environment optimized to promote and accelerate protein folding. This chain is Chaperonin GroEL 3, found in Burkholderia ambifaria (strain ATCC BAA-244 / DSM 16087 / CCUG 44356 / LMG 19182 / AMMD) (Burkholderia cepacia (strain AMMD)).